The chain runs to 256 residues: Hydroxyacylglutathione hydrolase (256 aa).

The Zn(2+) site is built by H55, H57, D59, H60, H113, D132, and H170.

It belongs to the metallo-beta-lactamase superfamily. Glyoxalase II family. Monomer. Zn(2+) serves as cofactor.

The catalysed reaction is an S-(2-hydroxyacyl)glutathione + H2O = a 2-hydroxy carboxylate + glutathione + H(+). It participates in secondary metabolite metabolism; methylglyoxal degradation; (R)-lactate from methylglyoxal: step 2/2. Functionally, thiolesterase that catalyzes the hydrolysis of S-D-lactoyl-glutathione to form glutathione and D-lactic acid. This Methylococcus capsulatus (strain ATCC 33009 / NCIMB 11132 / Bath) protein is Hydroxyacylglutathione hydrolase.